The chain runs to 171 residues: Squamosa promoter-binding protein 2 (171 aa).

Disordered stretches follow at residues 20-46 (GDEG…VVKV) and 57-76 (KLNL…TASG). Positions 22–40 (EGSDFEEEEEGEDEEEEEQ) are enriched in acidic residues. Residues 82-159 (QPCCLVENCG…AGHNERRRKS (78 aa)) form an SBP-type zinc finger. Zn(2+) is bound by residues cysteine 85, cysteine 90, cysteine 107, histidine 110, cysteine 126, cysteine 129, histidine 133, and cysteine 145. The Bipartite nuclear localization signal motif lies at 142–158 (KRSCRRRLAGHNERRRK). The segment covering 149–158 (LAGHNERRRK) has biased composition (basic residues). A disordered region spans residues 149 to 171 (LAGHNERRRKSSLESHKEGRSPR). The span at 159-171 (SSLESHKEGRSPR) shows a compositional bias: basic and acidic residues.

It localises to the nucleus. In terms of biological role, probable transcriptional factor. Binds to the promoter of the SQUAMOSA gene. The protein is Squamosa promoter-binding protein 2 (SBP2) of Antirrhinum majus (Garden snapdragon).